A 45-amino-acid polypeptide reads, in one-letter code: EQCGRQAGGKLCPNNLCCSQYGWCGSSDDYCSPSKNCQSNCKGGG.

The Chitin-binding type-1 domain maps to 1–43 (EQCGRQAGGKLCPNNLCCSQYGWCGSSDDYCSPSKNCQSNCKG). Disulfide bonds link C3/C18, C12/C24, C17/C31, and C37/C41.

N-acetyl-D-glucosamine / N-acetyl-D-neuraminic acid binding lectin. Can inhibit fungal growth. The polypeptide is Pseudo-hevein (Hevea brasiliensis (Para rubber tree)).